We begin with the raw amino-acid sequence, 261 residues long: Bidirectional sugar transporter SWEET1b (261 aa).

At Met-1–Lys-6 the chain is on the extracellular side. A helical transmembrane segment spans residues Phe-7–Thr-27. In terms of domain architecture, MtN3/slv 1 spans Phe-7–His-95. The Cytoplasmic segment spans residues Phe-28 to Gly-42. The helical transmembrane segment at Val-43–Val-63 threads the bilayer. At Ser-64–Ser-71 the chain is on the extracellular side. The chain crosses the membrane as a helical span at residues Thr-72–Ala-92. The Cytoplasmic segment spans residues Ser-93–Thr-101. The chain crosses the membrane as a helical span at residues Leu-102 to Ala-122. Residues Leu-123–Lys-129 lie on the Extracellular side of the membrane. A helical transmembrane segment spans residues Leu-130–Ile-150. The MtN3/slv 2 domain occupies Gly-133–Lys-215. Residues Met-151–Pro-164 are Cytoplasmic-facing. A helical membrane pass occupies residues Phe-165 to Gly-185. The Extracellular portion of the chain corresponds to Arg-186 to Phe-189. A helical membrane pass occupies residues Val-190–Ile-210. The Cytoplasmic portion of the chain corresponds to Tyr-211 to Val-261. The segment at Gly-218–Val-261 is disordered.

Belongs to the SWEET sugar transporter family. In terms of assembly, forms homodimers. As to expression, highly expressed in leaves. Expressed at very low levels in roots, stems and panicles.

It localises to the cell membrane. The enzyme catalyses D-glucose(out) = D-glucose(in). It catalyses the reaction D-galactose(in) = D-galactose(out). Mediates transport of sugars across the plasma membrane. Can transport glucose and galactose, but not fructose, mannose and sucrose. The chain is Bidirectional sugar transporter SWEET1b (SWEET1B) from Oryza sativa subsp. japonica (Rice).